The sequence spans 669 residues: PDF receptor (669 aa).

Topologically, residues Met1 to Glu244 are extracellular. The tract at residues Arg24 to Ser52 is disordered. Over residues Ser26 to Thr40 the composition is skewed to low complexity. Residues Asn111, Asn117, Asn130, Asn137, Asn148, and Asn198 are each glycosylated (N-linked (GlcNAc...) asparagine). The helical transmembrane segment at Ile245–Phe265 threads the bilayer. At Arg266 to Lys274 the chain is on the cytoplasmic side. The helical transmembrane segment at Ile275–Leu295 threads the bilayer. Over Asp296–Ala334 the chain is Extracellular. Asn308 is a glycosylation site (N-linked (GlcNAc...) asparagine). The helical transmembrane segment at Met335–Phe355 threads the bilayer. Residues Gln356–Arg366 lie on the Cytoplasmic side of the membrane. A helical transmembrane segment spans residues Leu367 to Met387. The Extracellular segment spans residues Asp388–Arg411. The helical transmembrane segment at Leu412–Lys432 threads the bilayer. The Cytoplasmic portion of the chain corresponds to Leu433–Arg449. Residues Ala450–Leu470 traverse the membrane as a helical segment. Residues Lys471–Ser480 lie on the Extracellular side of the membrane. The helical transmembrane segment at Tyr481–Leu501 threads the bilayer. At Asn502–Gln669 the chain is on the cytoplasmic side. Disordered stretches follow at residues Ala536–Ser573 and Pro590–Asp614. The span at Lys595 to Ala609 shows a compositional bias: basic and acidic residues.

It belongs to the G-protein coupled receptor 2 family. In terms of tissue distribution, mainly present in clock neurons of the brain. Localizes in all 4 s-LNv neurons, 1 LNd neuron, 7 DN1 neurons, and 1 DN3 neuron. In addition to the clock neurons, it is also present in approximately 13 pairs of neurons along the ventral nerve cord in third instar larvae, which do not overlap with dopaminergic or serotonergic neurons. Not present in DN2 neurons (at protein level).

It localises to the cell membrane. Receptor for PDF, a neuropeptide controlling circadian behavioral rhythms. Probably regulates circadian behavioral rhythms through coordination of activities of clock neurons. PDF-binding results in the elevation of cAMP synthesis. Plays a role in sleep regulation and regulates the state transition from sleep to wake. This Drosophila melanogaster (Fruit fly) protein is PDF receptor.